The chain runs to 341 residues: Abnormal cell lineage protein 44 (341 aa).

Residues 1 to 21 form the signal peptide; it reads MRALYFRTTTLSTFFILCSLA. 11 disulfide bridges follow: Cys84–Cys95, Cys134–Cys142, Cys144–Cys158, Cys206–Cys220, Cys208–Cys215, Cys265–Cys292, Cys275–Cys287, Cys291–Cys331, Cys307–Cys322, Cys309–Cys319, and Cys314–Cys315. Ser212 is lipidated: O-palmitoleoyl serine; by mom-1. N-linked (GlcNAc...) asparagine glycosylation occurs at Asn279.

The protein belongs to the Wnt family. In terms of processing, palmitoleoylation is required for efficient binding to frizzled receptors. Depalmitoleoylation leads to Wnt signaling pathway inhibition.

The protein localises to the secreted. It localises to the extracellular space. Its subcellular location is the extracellular matrix. Functionally, ligand for members of the frizzled family of seven transmembrane receptors. Affects male tail development, vulval precursor cell specification and egg laying. Involved in morphogenesis by influencing polarity of asymmetric cell divisions of the B, U, and F cells in the male, and the T cell in males and hermaphrodites. Controls spindle orientation in B-gamma cell division during male copulatory spicule development. Involved in specification of the P7.p lineage during vulval development. Has a role in providing polarity and default lin-17 localization in axon development and positioning of neuromuscular synapses in DA9 regions by negatively regulating synaptogenesis. This is Abnormal cell lineage protein 44 from Caenorhabditis briggsae.